The chain runs to 1145 residues: DNA polymerase II large subunit (1145 aa).

Residues 284-303 (KSSSESDEDEETDGKPKIKP) form a disordered region.

This sequence belongs to the archaeal DNA polymerase II family. Heterodimer of a large subunit and a small subunit.

The enzyme catalyses DNA(n) + a 2'-deoxyribonucleoside 5'-triphosphate = DNA(n+1) + diphosphate. It catalyses the reaction Exonucleolytic cleavage in the 3'- to 5'-direction to yield nucleoside 5'-phosphates.. Its function is as follows. Possesses two activities: a DNA synthesis (polymerase) and an exonucleolytic activity that degrades single-stranded DNA in the 3'- to 5'-direction. Has a template-primer preference which is characteristic of a replicative DNA polymerase. In Methanococcoides burtonii (strain DSM 6242 / NBRC 107633 / OCM 468 / ACE-M), this protein is DNA polymerase II large subunit.